The chain runs to 99 residues: Integration host factor subunit alpha (99 aa).

The segment at 52–73 (FGNFTLRDKPQRPGRNPKTGEE) is disordered.

The protein belongs to the bacterial histone-like protein family. Heterodimer of an alpha and a beta chain.

In terms of biological role, this protein is one of the two subunits of integration host factor, a specific DNA-binding protein that functions in genetic recombination as well as in transcriptional and translational control. The polypeptide is Integration host factor subunit alpha (Legionella pneumophila subsp. pneumophila (strain Philadelphia 1 / ATCC 33152 / DSM 7513)).